Here is a 928-residue protein sequence, read N- to C-terminus: Type II inositol 3,4-bisphosphate 4-phosphatase (928 aa).

Basic and acidic residues predominate over residues 1-13; that stretch reads MEIKEEGTSEEGQ. Disordered stretches follow at residues 1 to 23, 481 to 516, and 548 to 575; these read MEIKEEGTSEEGQHFLPAAQAND, ILRKPPSPKVSTEEKSSQHDSPQQLRRQDSIPHHSD, and SRNDKSTGGDSSKDGDADPNLEDSLTSH. Positions 23–165 constitute a C2 domain; sequence DPEDIQFTSI…LKSKEQLLSL (143 aa). Composition is skewed to basic and acidic residues over residues 506–516 and 548–563; these read RRQDSIPHHSD and SRNDKSTGGDSSKDGD.

This sequence belongs to the inositol 3,4-bisphosphate 4-phosphatase family.

It carries out the reaction a 1,2-diacyl-sn-glycero-3-phospho-(1D-myo-inositol-3,4-bisphosphate) + H2O = a 1,2-diacyl-sn-glycero-3-phospho-(1D-myo-inositol-3-phosphate) + phosphate. The enzyme catalyses 1D-myo-inositol 3,4-bisphosphate + H2O = 1D-myo-inositol 3-phosphate + phosphate. The catalysed reaction is 1D-myo-inositol 1,3,4-trisphosphate + H2O = 1D-myo-inositol 1,3-bisphosphate + phosphate. The protein operates within signal transduction; phosphatidylinositol signaling pathway. Strongly inhibited by inositol hexakisphosphate. Functionally, catalyzes the hydrolysis of the 4-position phosphate of phosphatidylinositol 3,4-bisphosphate, inositol 1,3,4-trisphosphate and inositol 3,4-bisphosphate. Plays a role in the late stages of macropinocytosis by dephosphorylating phosphatidylinositol 3,4-bisphosphate in membrane ruffles. The lipid phosphatase activity is critical for tumor suppressor function. Antagonizes the PI3K-AKT/PKB signaling pathway by dephosphorylating phosphoinositides and thereby modulating cell cycle progression and cell survival. The protein is Type II inositol 3,4-bisphosphate 4-phosphatase (Inpp4b) of Rattus norvegicus (Rat).